The chain runs to 393 residues: Acetate kinase (393 aa).

Asparagine 8 lines the Mg(2+) pocket. Lysine 15 contributes to the ATP binding site. Arginine 91 serves as a coordination point for substrate. Aspartate 148 serves as the catalytic Proton donor/acceptor. ATP contacts are provided by residues 206 to 210 (HLGSG), 280 to 282 (DMR), and 325 to 329 (GVGEN). Glutamate 376 serves as a coordination point for Mg(2+).

It belongs to the acetokinase family. As to quaternary structure, homodimer. Requires Mg(2+) as cofactor. Mn(2+) is required as a cofactor.

Its subcellular location is the cytoplasm. It catalyses the reaction acetate + ATP = acetyl phosphate + ADP. It functions in the pathway metabolic intermediate biosynthesis; acetyl-CoA biosynthesis; acetyl-CoA from acetate: step 1/2. Catalyzes the formation of acetyl phosphate from acetate and ATP. Can also catalyze the reverse reaction. This is Acetate kinase from Rhizobium meliloti (Ensifer meliloti).